The sequence spans 406 residues: Tyrosine-protein phosphatase non-receptor type 2 (406 aa).

The 271-residue stretch at 5-275 folds into the Tyrosine-protein phosphatase domain; the sequence is IEREFEELDA…RFSYMAIIEG (271 aa). Residue Tyr-22 is modified to Phosphotyrosine. Position 52 is a phosphoserine (Ser-52). Tyr-68 carries the phosphotyrosine modification. Substrate contacts are provided by residues Asp-182, 216–222, and Gln-260; that span reads CSAGIGR. Cys-216 (phosphocysteine intermediate) is an active-site residue. An S-nitrosocysteine modification is found at Cys-216. A phosphoserine mark is found at Ser-293, Ser-298, Ser-304, Ser-320, and Ser-339. The interval 341 to 406 is endoplasmic reticulum location; that stretch reads ESILRKRIRE…ALVGWTLLFH (66 aa). The mediates interaction with STX17 stretch occupies residues 371–406; that stretch reads ERKRKRWLYWQPILTKMGFVSVILVGALVGWTLLFH.

The protein belongs to the protein-tyrosine phosphatase family. Non-receptor class 1 subfamily. As to quaternary structure, interacts with RMDN3. Isoform 1 interacts with TMED9. Isoform 1 interacts with STX17; dephosphorylates STX17. Interacts with ITGA1 (via cytoplasmic domain); activates the phosphatase activity towards EGFR. Interacts with TRAF2; probably involved in tumor necrosis factor-mediated signaling. Interacts with MET. Interacts with FAM220A and STAT3; interaction with FAM220A promotes interaction of PTPN2 with transcriptional activator STAT3, leading to dephosphorylation of STAT3 by PTPN2 and negative regulation of STAT3 transcriptional activator activity. In terms of processing, specifically phosphorylated in a cell cycle-dependent manner by cyclin-dependent kinases CDK1 and CDK2. Probably activated through phosphorylation by PKR. Ubiquitously expressed. The highest expression levels were found in ovary, testis, thymus and kidney.

It is found in the endoplasmic reticulum. The protein localises to the endoplasmic reticulum-Golgi intermediate compartment. The protein resides in the nucleus. Its subcellular location is the cytoplasm. It localises to the cell membrane. It catalyses the reaction O-phospho-L-tyrosyl-[protein] + H2O = L-tyrosyl-[protein] + phosphate. Its function is as follows. Non-receptor type tyrosine-specific phosphatase that dephosphorylates receptor protein tyrosine kinases including INSR, EGFR, CSF1R, PDGFR. Also dephosphorylates non-receptor protein tyrosine kinases like JAK1, JAK2, JAK3, Src family kinases, STAT1, STAT3 and STAT6 either in the nucleus or the cytoplasm. Negatively regulates numerous signaling pathways and biological processes like hematopoiesis, inflammatory response, cell proliferation and differentiation, and glucose homeostasis. Plays a multifaceted and important role in the development of the immune system. Functions in T-cell receptor signaling through dephosphorylation of FYN and LCK to control T-cells differentiation and activation. Dephosphorylates CSF1R, negatively regulating its downstream signaling and macrophage differentiation. Negatively regulates cytokine (IL2/interleukin-2 and interferon)-mediated signaling through dephosphorylation of the cytoplasmic kinases JAK1, JAK3 and their substrate STAT1, that propagate signaling downstream of the cytokine receptors. Also regulates the IL6/interleukin-6 and IL4/interleukin-4 cytokine signaling through dephosphorylation of STAT3 and STAT6 respectively. In addition to the immune system, it is involved in anchorage-dependent, negative regulation of EGF-stimulated cell growth. Activated by the integrin ITGA1/ITGB1, it dephosphorylates EGFR and negatively regulates EGF signaling. Dephosphorylates PDGFRB and negatively regulates platelet-derived growth factor receptor-beta signaling pathway and therefore cell proliferation. Negatively regulates tumor necrosis factor-mediated signaling downstream via MAPK through SRC dephosphorylation. May also regulate the hepatocyte growth factor receptor signaling pathway through dephosphorylation of the hepatocyte growth factor receptor MET. Also plays an important role in glucose homeostasis. For instance, negatively regulates the insulin receptor signaling pathway through the dephosphorylation of INSR and control gluconeogenesis and liver glucose production through negative regulation of the IL6 signaling pathways. May also bind DNA. The chain is Tyrosine-protein phosphatase non-receptor type 2 (Ptpn2) from Mus musculus (Mouse).